Consider the following 146-residue polypeptide: Large ribosomal subunit protein uL15 (146 aa).

Residues M1–K13 are compositionally biased toward basic and acidic residues. The interval M1–Q54 is disordered. 2 stretches are compositionally biased toward gly residues: residues R21 to A31 and S42 to G52.

This sequence belongs to the universal ribosomal protein uL15 family. As to quaternary structure, part of the 50S ribosomal subunit.

Functionally, binds to the 23S rRNA. The chain is Large ribosomal subunit protein uL15 from Clostridium novyi (strain NT).